The primary structure comprises 259 residues: Undecaprenyl-diphosphatase 3 (259 aa).

8 helical membrane passes run 1-21, 39-59, 71-91, 99-119, 133-153, 174-194, 208-228, and 239-259; these read MNWL…FLPI, AGLF…FIYY, FSKL…IGLL, ISKT…FLYM, ITYK…FPAI, AYFS…LQFV, SLIV…SWMI, and FAYY…TDVF.

Belongs to the UppP family.

It localises to the cell membrane. The enzyme catalyses di-trans,octa-cis-undecaprenyl diphosphate + H2O = di-trans,octa-cis-undecaprenyl phosphate + phosphate + H(+). Its function is as follows. Catalyzes the dephosphorylation of undecaprenyl diphosphate (UPP). Confers resistance to bacitracin. The polypeptide is Undecaprenyl-diphosphatase 3 (Bacillus cereus (strain ATCC 14579 / DSM 31 / CCUG 7414 / JCM 2152 / NBRC 15305 / NCIMB 9373 / NCTC 2599 / NRRL B-3711)).